A 104-amino-acid polypeptide reads, in one-letter code: Large ribosomal subunit protein uL24 (104 aa).

This sequence belongs to the universal ribosomal protein uL24 family. As to quaternary structure, part of the 50S ribosomal subunit.

One of two assembly initiator proteins, it binds directly to the 5'-end of the 23S rRNA, where it nucleates assembly of the 50S subunit. Functionally, one of the proteins that surrounds the polypeptide exit tunnel on the outside of the subunit. The sequence is that of Large ribosomal subunit protein uL24 from Dichelobacter nodosus (strain VCS1703A).